The sequence spans 233 residues: Large ribosomal subunit protein uL3 (233 aa).

The tract at residues 145 to 172 is disordered; it reads FGSQRASHGNSRSHRVPGSIGQAQDPGR. Glutamine 168 is subject to N5-methylglutamine.

It belongs to the universal ribosomal protein uL3 family. In terms of assembly, part of the 50S ribosomal subunit. Forms a cluster with proteins L14 and L19. In terms of processing, methylated by PrmB.

In terms of biological role, one of the primary rRNA binding proteins, it binds directly near the 3'-end of the 23S rRNA, where it nucleates assembly of the 50S subunit. This is Large ribosomal subunit protein uL3 from Bordetella petrii (strain ATCC BAA-461 / DSM 12804 / CCUG 43448).